The chain runs to 575 residues: Protein AUXIN SIGNALING F-BOX 2 (575 aa).

One can recognise an F-box domain in the interval 1-47; the sequence is MNYFPDEVIEHVFDFVTSHKDRNAISLVCKSWYKIERYSRQKVFIGN. K69 is a binding site for 1D-myo-inositol hexakisphosphate. The interval 76–77 is interaction with auxin-responsive proteins; sequence DF. 1D-myo-inositol hexakisphosphate is bound by residues 108 to 109 and R340; that span reads KR. Residues 343-348 form an interaction with auxin-responsive proteins region; it reads PSDLLG. Residue 396 to 398 coordinates 1D-myo-inositol hexakisphosphate; that stretch reads RFR. The interaction with auxin-responsive proteins stretch occupies residues 400-404; the sequence is CILEP. R431 is a binding site for 1D-myo-inositol hexakisphosphate. An interaction with auxin-responsive proteins region spans residues 459–460; that stretch reads AF. Residues 479–480 and R504 contribute to the 1D-myo-inositol hexakisphosphate site; that span reads KK.

As to quaternary structure, part of a SCF (SKP1-cullin-F-box) protein ligase complex. Interacts with Aux/IAA proteins (IAA7) in an auxin-dependent manner. As to expression, ubiquitous, with higher levels in seedlings.

It localises to the nucleus. It functions in the pathway protein modification; protein ubiquitination. Functionally, component of SCF(ASK-cullin-F-box) E3 ubiquitin ligase complexes, which may mediate the ubiquitination and subsequent proteasomal degradation of target proteins. Confers sensitivity to the virulent bacterial pathogen P.syringae. Auxin receptor that mediates Aux/IAA proteins proteasomal degradation and auxin-regulated transcription. Involved in embryogenesis regulation by auxin. The sequence is that of Protein AUXIN SIGNALING F-BOX 2 (AFB2) from Arabidopsis thaliana (Mouse-ear cress).